Here is a 447-residue protein sequence, read N- to C-terminus: Beclin-2 (447 aa).

Positions glutamate 169–tyrosine 228 form a coiled coil. Residues glutamate 186–glutamine 256 are required for homodimer formation.

Belongs to the beclin family. In terms of assembly, homodimer (via coiled-coil domain). Interacts (via coiled-coil domain) with ATG14 (via coiled-coil domain); this interaction is tighter than BECN2 self-association. Interacts with AMBRA1, UVRAG and PIK3C3/VPS34; these interactions are not disrupted by starvation. Does not interact with RUBCN. Interacts (via N-terminus) with GPRASP1/GASP1; the interaction is direct. In terms of tissue distribution, expressed in brain, skeletal muscle, placenta, thymus and uterus. Expressed at a lower level in liver, testis, stomach, and 17-day-old embryos.

Its subcellular location is the cytoplasm. Involved in 2 distinct lysosomal degradation pathways: acts as a regulator of autophagy and as a regulator of G-protein coupled receptors turnover. Regulates degradation in lysosomes of a variety of G-protein coupled receptors via its interaction with GPRASP1/GASP1. The polypeptide is Beclin-2 (Mus musculus (Mouse)).